The primary structure comprises 166 residues: Regulatory protein RecX (166 aa).

This sequence belongs to the RecX family.

The protein resides in the cytoplasm. Its function is as follows. Modulates RecA activity. The polypeptide is Regulatory protein RecX (Shigella boydii serotype 18 (strain CDC 3083-94 / BS512)).